A 378-amino-acid polypeptide reads, in one-letter code: Ribosomal RNA large subunit methyltransferase G (378 aa).

Belongs to the methyltransferase superfamily. RlmG family.

It localises to the cytoplasm. The catalysed reaction is guanosine(1835) in 23S rRNA + S-adenosyl-L-methionine = N(2)-methylguanosine(1835) in 23S rRNA + S-adenosyl-L-homocysteine + H(+). Functionally, specifically methylates the guanine in position 1835 (m2G1835) of 23S rRNA. The protein is Ribosomal RNA large subunit methyltransferase G of Escherichia coli (strain ATCC 8739 / DSM 1576 / NBRC 3972 / NCIMB 8545 / WDCM 00012 / Crooks).